The primary structure comprises 290 residues: Cbb3-type cytochrome c oxidase subunit FixP (290 aa).

The helical transmembrane segment at 33-53 (WWVITFYITIVWAIGYWIVYP) threads the bilayer. 2 Cytochrome c domains span residues 109–198 (LARA…RSLS) and 206–287 (YDAA…HSLG). Heme c is bound by residues cysteine 122, cysteine 125, histidine 126, methionine 173, cysteine 219, cysteine 222, histidine 223, and methionine 264.

It belongs to the CcoP / FixP family. Component of the cbb3-type cytochrome c oxidase at least composed of FixN, FixO, FixQ and FixP. Heme c serves as cofactor.

The protein resides in the cell inner membrane. It functions in the pathway energy metabolism; oxidative phosphorylation. Functionally, C-type cytochrome. Part of the cbb3-type cytochrome c oxidase complex. FixP subunit is required for transferring electrons from donor cytochrome c via its heme groups to FixO subunit. From there, electrons are shuttled to the catalytic binuclear center of FixN subunit where oxygen reduction takes place. The complex also functions as a proton pump. In Bradyrhizobium sp. (strain ORS 278), this protein is Cbb3-type cytochrome c oxidase subunit FixP.